Here is a 213-residue protein sequence, read N- to C-terminus: Probable nicotinate-nucleotide adenylyltransferase (213 aa).

Belongs to the NadD family.

The enzyme catalyses nicotinate beta-D-ribonucleotide + ATP + H(+) = deamido-NAD(+) + diphosphate. It participates in cofactor biosynthesis; NAD(+) biosynthesis; deamido-NAD(+) from nicotinate D-ribonucleotide: step 1/1. In terms of biological role, catalyzes the reversible adenylation of nicotinate mononucleotide (NaMN) to nicotinic acid adenine dinucleotide (NaAD). This is Probable nicotinate-nucleotide adenylyltransferase from Trichlorobacter lovleyi (strain ATCC BAA-1151 / DSM 17278 / SZ) (Geobacter lovleyi).